The primary structure comprises 210 residues: Proteasome subunit beta (210 aa).

Positions 1–9 (MIHDKVFKG) are cleaved as a propeptide — removed in mature form; by autocatalysis. Thr-10 acts as the Nucleophile in catalysis.

The protein belongs to the peptidase T1B family. The 20S proteasome core is composed of 14 alpha and 14 beta subunits that assemble into four stacked heptameric rings, resulting in a barrel-shaped structure. The two inner rings, each composed of seven catalytic beta subunits, are sandwiched by two outer rings, each composed of seven alpha subunits. The catalytic chamber with the active sites is on the inside of the barrel. Has a gated structure, the ends of the cylinder being occluded by the N-termini of the alpha-subunits. Is capped at one or both ends by the proteasome regulatory ATPase, PAN.

The protein resides in the cytoplasm. It carries out the reaction Cleavage of peptide bonds with very broad specificity.. With respect to regulation, the formation of the proteasomal ATPase PAN-20S proteasome complex, via the docking of the C-termini of PAN into the intersubunit pockets in the alpha-rings, triggers opening of the gate for substrate entry. Interconversion between the open-gate and close-gate conformations leads to a dynamic regulation of the 20S proteasome proteolysis activity. Its function is as follows. Component of the proteasome core, a large protease complex with broad specificity involved in protein degradation. The sequence is that of Proteasome subunit beta from Ferroglobus placidus (strain DSM 10642 / AEDII12DO).